Here is a 354-residue protein sequence, read N- to C-terminus: Photosystem II protein D1 1 (354 aa).

A run of 3 helical transmembrane segments spans residues 29–46, 118–133, and 142–156; these read YIGW…TATT, HFLI…EWEL, and WIAV…AATA. Histidine 118 contacts chlorophyll a. Position 126 (tyrosine 126) interacts with pheophytin a. [CaMn4O5] cluster-binding residues include aspartate 170 and glutamate 189. The helical transmembrane segment at 197 to 218 threads the bilayer; sequence FHQLGVAGVFGGALFSAMHGSL. Histidine 198 is a binding site for chlorophyll a. A quinone is bound by residues histidine 215 and 264–265; that span reads SF. Histidine 215 is a binding site for Fe cation. Histidine 272 lines the Fe cation pocket. The chain crosses the membrane as a helical span at residues 274–288; the sequence is FLAAWPVIGIWFTAL. Histidine 332, glutamate 333, aspartate 342, and alanine 344 together coordinate [CaMn4O5] cluster. A propeptide spanning residues 345–354 is cleaved from the precursor; that stretch reads AVEVAPAIRG.

It belongs to the reaction center PufL/M/PsbA/D family. In terms of assembly, PSII is composed of 1 copy each of membrane proteins PsbA, PsbB, PsbC, PsbD, PsbE, PsbF, PsbH, PsbI, PsbJ, PsbK, PsbL, PsbM, PsbT, PsbX, PsbY, PsbZ, Psb30/Ycf12, peripheral proteins PsbO, CyanoQ (PsbQ), PsbU, PsbV and a large number of cofactors. It forms dimeric complexes. The D1/D2 heterodimer binds P680, chlorophylls that are the primary electron donor of PSII, and subsequent electron acceptors. It shares a non-heme iron and each subunit binds pheophytin, quinone, additional chlorophylls, carotenoids and lipids. D1 provides most of the ligands for the Mn4-Ca-O5 cluster of the oxygen-evolving complex (OEC). There is also a Cl(-1) ion associated with D1 and D2, which is required for oxygen evolution. The PSII complex binds additional chlorophylls, carotenoids and specific lipids. is required as a cofactor. Post-translationally, tyr-161 forms a radical intermediate that is referred to as redox-active TyrZ, YZ or Y-Z. C-terminally processed by CtpA; processing is essential to allow assembly of the oxygen-evolving complex and thus photosynthetic growth.

The protein resides in the cellular thylakoid membrane. It catalyses the reaction 2 a plastoquinone + 4 hnu + 2 H2O = 2 a plastoquinol + O2. In terms of biological role, photosystem II (PSII) is a light-driven water:plastoquinone oxidoreductase that uses light energy to abstract electrons from H(2)O, generating O(2) and a proton gradient subsequently used for ATP formation. It consists of a core antenna complex that captures photons, and an electron transfer chain that converts photonic excitation into a charge separation. The D1/D2 (PsbA/PsbD) reaction center heterodimer binds P680, the primary electron donor of PSII as well as several subsequent electron acceptors. The protein is Photosystem II protein D1 1 of Synechococcus sp. (strain JA-3-3Ab) (Cyanobacteria bacterium Yellowstone A-Prime).